We begin with the raw amino-acid sequence, 612 residues long: DEAD-box ATP-dependent RNA helicase 11 (612 aa).

Disordered stretches follow at residues 1-70 and 83-104; these read MSAS…SGGG and GAGG…WDRR. Serine 2 is modified (N-acetylserine). Gly residues-rich tracts occupy residues 61 to 70 and 83 to 94; these read SGGGGASGGG and GAGGGGGGGGGW. A Q motif motif is present at residues 151–179; that stretch reads NTFADIDLGDALNLNIRRCKYVRPTPVQR. The Helicase ATP-binding domain occupies 182-366; the sequence is IPILLAERDL…ADFMSNYIFL (185 aa). 195 to 202 provides a ligand contact to ATP; it reads AQTGSGKT. The DEAD box motif lies at 310–313; it reads DEAD. One can recognise a Helicase C-terminal domain in the interval 377–542; it reads LITQRVEFVQ…EVPEWLTRYA (166 aa). Positions 547 to 583 are disordered; the sequence is FGGGKKRSGGRFGGRDFRREGSYSRGGGGGGGGGGSD. Over residues 559 to 568 the composition is skewed to basic and acidic residues; it reads GGRDFRREGS. A compositionally biased stretch (gly residues) spans 570–583; sequence SRGGGGGGGGGGSD.

This sequence belongs to the DEAD box helicase family. DDX3/DED1 subfamily.

It catalyses the reaction ATP + H2O = ADP + phosphate + H(+). This is DEAD-box ATP-dependent RNA helicase 11 (RH11) from Arabidopsis thaliana (Mouse-ear cress).